Consider the following 577-residue polypeptide: General transcription factor IIF subunit 1 (577 aa).

The tract at residues 1–36 is disordered; that stretch reads MSSASKSTPSAASGSSTSAAAAAAASVASGSASSSA. Phosphoserine occurs at positions 183, 246, 250, and 252. The interval 236–508 is disordered; it reads KITDMDEWID…TSLPTSFSGG (273 aa). Over residues 240 to 256 the composition is skewed to acidic residues; sequence MDEWIDSEDESDSEDEE. Residues 257 to 271 show a composition bias toward basic and acidic residues; sequence DKKKKEQEDSDDGKA. The segment covering 272–285 has biased composition (basic residues); it reads KGKGKKGADKKKKK. Positions 289–304 are enriched in acidic residues; sequence DDEAFEESDDGDEEGR. Positions 319-341 are enriched in basic and acidic residues; the sequence is PEAKVDKDMKGVAEEDALRKLLT. Position 341 is a phosphothreonine (threonine 341). Phosphoserine occurs at positions 342, 352, and 355. Residues 362-376 are compositionally biased toward basic and acidic residues; the sequence is GEKKKKDKGKDEVSK. Low complexity predominate over residues 392–406; it reads SNGSGDSSTDFSSDS. The span at 423 to 437 shows a compositional bias: basic and acidic residues; the sequence is VVKDKDKEKEKEKES. Over residues 438–456 the composition is skewed to low complexity; sequence AASSKVIASSSNANKSRSA. Phosphoserine occurs at positions 453 and 455. Threonine 457 carries the phosphothreonine modification. Composition is skewed to polar residues over residues 471 to 489 and 496 to 506; these read SLPSDLTASDTSNSPTSTP and EISTSLPTSFS. Serine 482 and serine 484 each carry phosphoserine. The residue at position 488 (threonine 488) is a Phosphothreonine.

Belongs to the TFIIF alpha subunit family. As to quaternary structure, heterodimer of an alpha and a beta subunit. Post-translationally, phosphorylated on Ser and other residues by TAF1 and casein kinase II-like kinases.

Its subcellular location is the nucleus. In terms of biological role, TFIIF is a general transcription initiation factor that binds to RNA polymerase II and helps to recruit it to the initiation complex in collaboration with TFIIB. It promotes transcription elongation. In Drosophila melanogaster (Fruit fly), this protein is General transcription factor IIF subunit 1.